We begin with the raw amino-acid sequence, 246 residues long: Probable transcriptional regulatory protein CLK_2466 (246 aa).

Belongs to the TACO1 family.

The protein resides in the cytoplasm. The protein is Probable transcriptional regulatory protein CLK_2466 of Clostridium botulinum (strain Loch Maree / Type A3).